A 446-amino-acid chain; its full sequence is NADH-ubiquinone oxidoreductase chain 4 (446 aa).

The next 13 helical transmembrane spans lie at isoleucine 4–valine 24, methionine 56–serine 76, isoleucine 93–tyrosine 113, leucine 114–proline 134, alanine 139–phenylalanine 159, leucine 182–leucine 202, isoleucine 218–leucine 238, tyrosine 245–leucine 265, alanine 272–methionine 292, leucine 297–leucine 317, methionine 330–leucine 350, isoleucine 373–alanine 393, and leucine 426–leucine 446.

Belongs to the complex I subunit 4 family.

The protein localises to the mitochondrion membrane. It catalyses the reaction a ubiquinone + NADH + 5 H(+)(in) = a ubiquinol + NAD(+) + 4 H(+)(out). Core subunit of the mitochondrial membrane respiratory chain NADH dehydrogenase (Complex I) that is believed to belong to the minimal assembly required for catalysis. Complex I functions in the transfer of electrons from NADH to the respiratory chain. The immediate electron acceptor for the enzyme is believed to be ubiquinone. The sequence is that of NADH-ubiquinone oxidoreductase chain 4 (mt:ND4) from Drosophila melanogaster (Fruit fly).